Here is a 185-residue protein sequence, read N- to C-terminus: Ribosome-recycling factor (185 aa).

A disordered region spans residues 137-159 (EDLKADEKAKDISEDDRKRMEDE).

The protein belongs to the RRF family.

The protein resides in the cytoplasm. Functionally, responsible for the release of ribosomes from messenger RNA at the termination of protein biosynthesis. May increase the efficiency of translation by recycling ribosomes from one round of translation to another. The polypeptide is Ribosome-recycling factor (Erythrobacter litoralis (strain HTCC2594)).